A 268-amino-acid chain; its full sequence is Nickel import ATP-binding protein NikE (268 aa).

The 249-residue stretch at Leu-4–Asn-252 folds into the ABC transporter domain. Gly-45 to Ser-52 provides a ligand contact to ATP.

This sequence belongs to the ABC transporter superfamily. Nickel importer (TC 3.A.1.5.3) family. In terms of assembly, the complex is composed of two ATP-binding proteins (NikD and NikE), two transmembrane proteins (NikB and NikC) and a solute-binding protein (NikA).

Its subcellular location is the cell inner membrane. It carries out the reaction Ni(2+)(out) + ATP + H2O = Ni(2+)(in) + ADP + phosphate + H(+). In terms of biological role, part of the ABC transporter complex NikABCDE involved in nickel import. Responsible for energy coupling to the transport system. The polypeptide is Nickel import ATP-binding protein NikE (Escherichia coli (strain K12)).